The primary structure comprises 1027 residues: Exportin-T (1027 aa).

It belongs to the exportin family.

It localises to the nucleus. Its subcellular location is the cytoplasm. TRNA nucleus export receptor which facilitates tRNA translocation across the nuclear pore complex. Involved in pre-tRNA splicing, probably by affecting the interaction of pre-tRNA with splicing endonuclease. This is Exportin-T (LOS1) from Pyricularia oryzae (strain 70-15 / ATCC MYA-4617 / FGSC 8958) (Rice blast fungus).